A 971-amino-acid polypeptide reads, in one-letter code: Exportin-2 (971 aa).

At Met1 the chain carries N-acetylmethionine. In terms of domain architecture, Importin N-terminal spans 29–102 (AEKFLESVEG…KANIVHLMLS (74 aa)). At Ser112 the chain carries Phosphoserine. Lys574 and Lys824 each carry N6-acetyllysine. Phosphoserine is present on Ser931.

It belongs to the XPO2/CSE1 family. In terms of assembly, found in a complex with CSE1L/XPO2, Ran and KPNA2. Binds with high affinity to importin-alpha only in the presence of RanGTP. The complex is dissociated by the combined action of RanBP1 and RanGAP1. Interacts with CFTR. Detected in brain, placenta, ovary, testis and trachea (at protein level). Widely expressed. Highly expressed in testis and in proliferating cells.

The protein resides in the cytoplasm. The protein localises to the nucleus. Its function is as follows. Export receptor for importin-alpha. Mediates importin-alpha re-export from the nucleus to the cytoplasm after import substrates (cargos) have been released into the nucleoplasm. In the nucleus binds cooperatively to importin-alpha and to the GTPase Ran in its active GTP-bound form. Docking of this trimeric complex to the nuclear pore complex (NPC) is mediated through binding to nucleoporins. Upon transit of a nuclear export complex into the cytoplasm, disassembling of the complex and hydrolysis of Ran-GTP to Ran-GDP (induced by RANBP1 and RANGAP1, respectively) cause release of the importin-alpha from the export receptor. CSE1L/XPO2 then return to the nuclear compartment and mediate another round of transport. The directionality of nuclear export is thought to be conferred by an asymmetric distribution of the GTP- and GDP-bound forms of Ran between the cytoplasm and nucleus. In Homo sapiens (Human), this protein is Exportin-2 (CSE1L).